The sequence spans 868 residues: MGLSWALLPFLLLAFRAELLALQPALGSQPPSASSSHSMGSSRDFVSNVSSSQHPQPPGSEASAGIPDSNRFPQGLNSSHVPGLFRTNVSAEEQYLSPDVTSSETPPSRVSLDGLDSQDPDKDSGLPFLVKTPASQISVQTPDTKVPTKASGSKLSLEHHNLEPGSKISSEIYQAASFPQQVGGPLAVLVGTTIRLPLTPVPSSSPPAPLVVWRRGSKVLAAGGLGSQAPLISLDPMHQARLRFDQIRGGLELTSARLDDAGVYTVEVIRGGVSQQIREFVVGVFEPLPQLSVQPRAPETEEGAAELRLSCVGWNPGSGKLSWSRDGRALGTSDPEGAEPPRIRTERDQLLISRPVRSDHARYTCQVRSPFGHTEAAADVSVFYGPDAPVIRVSSDRDASPALYVTAGSNVTLHCSAPSRPPADIAWSLADPTEAAVPAGPRLLLPAVGPGHGGAYACIAANPRTGHRRRSVFNLTVADLPPGAPQCSVEGGPVDRSLRFRCSWPGGVPAASLQFQGLPEGVRAGPVPSTLLVTVPARPELSGVAVTCLARHLVATRTCTIIPEAPQEVLLQPIVEETQPGDVVVALEVTGCPPPSRASWARQGRPLAPGGGGRLQLSQDGRKLLINNFSLDWDLGNYSVLCSSALGAGGNQITLTGPSISSWRLQRAQEAAVLTWDVERGTLLTGFHIQAWTDSSEVDRVTMSRDWVSLLILGPQERSAIVPLPPRNPGTWAFRILPILGSLPGTPSQSRVYQAGSDLSPGAIAGIVLGSLLGLALLAGLLILCICCLRRYPGRASVKKQHSLTLAPVLTPPAKKIQSLTPVQTPRPLPIKTKMQSPHPAKAQQVISPSPTLCPGGSPWTVRAATQV.

The N-terminal stretch at 1–27 (MGLSWALLPFLLLAFRAELLALQPALG) is a signal peptide. Residues 26-52 (LGSQPPSASSSHSMGSSRDFVSNVSSS) show a composition bias toward low complexity. The disordered stretch occupies residues 26–82 (LGSQPPSASSSHSMGSSRDFVSNVSSSQHPQPPGSEASAGIPDSNRFPQGLNSSHVP). Topologically, residues 28 to 763 (SQPPSASSSH…QAGSDLSPGA (736 aa)) are extracellular. Residues asparagine 48, asparagine 77, and asparagine 88 are each glycosylated (N-linked (GlcNAc...) asparagine). Polar residues predominate over residues 71–80 (RFPQGLNSSH). Disordered stretches follow at residues 96–154 (LSPD…SGSK) and 323–342 (WSRDGRALGTSDPEGAEPPR). Polar residues-rich tracts occupy residues 99-108 (DVTSSETPPS) and 133-143 (PASQISVQTPD). 2 consecutive Ig-like C2-type domains span residues 289 to 381 (PQLS…ADVS) and 389 to 474 (PVIR…SVFN). A disulfide bridge links cysteine 311 with cysteine 365. An N-linked (GlcNAc...) asparagine glycan is attached at asparagine 410. A disulfide bond links cysteine 415 and cysteine 458. Asparagine 474, asparagine 628, and asparagine 637 each carry an N-linked (GlcNAc...) asparagine glycan. A helical transmembrane segment spans residues 764-784 (IAGIVLGSLLGLALLAGLLIL). The Cytoplasmic segment spans residues 785–868 (CICCLRRYPG…PWTVRAATQV (84 aa)).

The protein localises to the membrane. The sequence is that of V-set and immunoglobulin domain-containing protein 10-like (Vsig10l) from Mus musculus (Mouse).